The following is a 356-amino-acid chain: Glucose-1-phosphate thymidylyltransferase (356 aa).

Residues aspartate 107 and aspartate 221 each coordinate Mg(2+).

The protein belongs to the glucose-1-phosphate thymidylyltransferase family. Requires Mg(2+) as cofactor.

It carries out the reaction dTTP + alpha-D-glucose 1-phosphate + H(+) = dTDP-alpha-D-glucose + diphosphate. The protein operates within antibiotic biosynthesis. Functionally, involved in the biosynthesis of the two 2,6-deoxysugars, dTDP-L-oleandrose and dTDP-D-desosamine, attached to the macrolactone ring oleandolide to produce the aglycone antibiotic oleandomycin. Catalyzes the formation of dTDP-glucose from deoxythymidine triphosphate (dTTP) and glucose 1-phosphate. The sequence is that of Glucose-1-phosphate thymidylyltransferase from Streptomyces antibioticus.